A 45-amino-acid chain; its full sequence is Globin, minor monomeric component (45 aa).

Residues 1–45 (GLSAAERQVVASCWKDIAGADXGAGVGKEXLIKFISAAPEMAAVF) form the Globin domain.

It belongs to the globin family. As to quaternary structure, monomer.

This Glycera dibranchiata (Bloodworm) protein is Globin, minor monomeric component.